The sequence spans 962 residues: Protease 3 (962 aa).

An N-terminal signal peptide occupies residues 1-23; sequence MPRSTWFKALLLLVALWGPAVQA. Histidine 88 lines the Zn(2+) pocket. The Proton acceptor role is filled by glutamate 91. 2 residues coordinate Zn(2+): histidine 92 and glutamate 169.

This sequence belongs to the peptidase M16 family. In terms of assembly, monomer. It depends on Zn(2+) as a cofactor.

Its subcellular location is the periplasm. The catalysed reaction is Preferential cleavage of 16-Tyr-|-Leu-17 and 25-Phe-|-Tyr-26 bonds of oxidized insulin B chain. Also acts on other substrates of Mw less than 7 kDa such as insulin and glucagon.. In terms of biological role, endopeptidase that degrades small peptides of less than 7 kDa, such as glucagon and insulin. This chain is Protease 3 (ptrA), found in Salmonella typhimurium (strain LT2 / SGSC1412 / ATCC 700720).